The primary structure comprises 304 residues: E3 ubiquitin-protein ligase CHIP (304 aa).

Basic and acidic residues predominate over residues 1 to 10 (MKGKEEKEGG). Positions 1–30 (MKGKEEKEGGARLGTGGGGSPDKSPSAQEL) are disordered. Residue Lys2 forms a Glycyl lysine isopeptide (Lys-Gly) (interchain with G-Cter in ubiquitin) linkage. Positions 11–20 (ARLGTGGGGS) are enriched in gly residues. The residue at position 20 (Ser20) is a Phosphoserine. Residue Lys23 forms a Glycyl lysine isopeptide (Lys-Gly) (interchain with G-Cter in ubiquitin) linkage. Phosphoserine occurs at positions 24 and 26. TPR repeat units lie at residues 27 to 60 (AQEL…NPLV), 61 to 94 (AVYY…DGQS), and 96 to 128 (KAHF…AKEQ). The interval 102 to 201 (GQCQLEMESY…GHIRAQQACI (100 aa)) is required for interaction with MAPK7. The required for interaction with and ubiquitination of MYOCD stretch occupies residues 143 to 197 (AKKKRWNSIEERRIHQESELHSYLTRLIAAERERELEECQRNHEGHEDDGHIRAQ). The tract at residues 144–198 (KKKRWNSIEERRIHQESELHSYLTRLIAAERERELEECQRNHEGHEDDGHIRAQQ) is required for interaction with FOXO1. Residues 144 to 304 (KKKRWNSIEE…ISENGWVEDY (161 aa)) form a required for ubiquitination of FOXO1 region. Position 150 is a phosphoserine (Ser150). Glycyl lysine isopeptide (Lys-Gly) (interchain with G-Cter in ubiquitin) cross-links involve residues Lys222 and Lys256. Residues 227-301 (DIPDYLCGKI…DAFISENGWV (75 aa)) form the U-box domain. Ser274 carries the phosphoserine modification.

In terms of assembly, homodimer. Interacts with BAG2, and with the E2 ubiquitin conjugating enzymes UBE2D1, UBE2D2 and UBE2D3. Detected in a ternary complex containing STUB1, HSPA1A and HSPBP1. Part of a complex composed of STUB1/CHIP, VCP/p97, CHRNA3, and UBXN2A that modulates the ubiquitination and endoplasmic reticulum-associated degradation (ERAD) of CHRNA3. Within the complex UBXN2A acts as a scaffold protein required for the interaction of CHRNA3 with VCP/p97, this interaction also inhibits CHRNA3 ubiquitination by STUB1/CHIP and subsequently ERAD. Interacts with MKKS. Interacts with DNAAF4. Interacts (via the U-box domain) with the UBE2V2-UBE2N heterodimer; the complex has a specific 'Lys-63'-linked polyubiquitination activity. Interacts (when monoubiquitinated) with ATXN3. Interacts with UBE2W. Interacts with DNAJB6. Interacts with FLCN and HSP90AA1. Interacts with HSP90. Interacts with UBE2N and UBE2V1. Interacts (via TPR repeats) with HSPA8 (via C-terminus). Interacts (via TPR repeats) with HSPA1A (via C-terminus). Interacts with the non-acetylated form of HSPA1A and HSPA1B. Interacts with SMAD3 and HSP90AB1. Interacts with UBE4B. Interacts with PRMT5. Interacts with MYOCD (via C-terminus). Interacts with FOXO1 (when phosphorylated on 'Ser-253'). Interacts with MAPK7/ERK5; the interaction is enhanced in the presence of IGF1 or MAP2K5 and promotes STUB1/CHIP E3 ligase activity. Interacts with and ubiquitinates ESR1; the interaction is promoted in the absence of estradiol (17-beta-estradiol/E2). Interacts with ESR2. Interacts with and ubiquitinates NFATC3; HSPA1A/HSP70 is required as a co-chaperone. In macrophages, interacts with PAQR3; the interaction promotes PPARG poylubiquitination and STUB1-mediated degradation. Component of the chaperone-assisted selective autophagy (CASA) complex consisting of BAG3, HSPA8/HSC70, HSPB8 and STUB1/CHIP. Auto-ubiquitinated; mediated by UBE2D1 and UBE2D2 and enhanced in the presence of MAP2K5. Monoubiquitinated at Lys-2 following cell stress by UBE2W, promoting the interaction with ATXN3. In terms of tissue distribution, expressed in the brain.

It is found in the cytoplasm. It localises to the nucleus. Its subcellular location is the mitochondrion. It catalyses the reaction S-ubiquitinyl-[E2 ubiquitin-conjugating enzyme]-L-cysteine + [acceptor protein]-L-lysine = [E2 ubiquitin-conjugating enzyme]-L-cysteine + N(6)-ubiquitinyl-[acceptor protein]-L-lysine.. The protein operates within protein modification; protein ubiquitination. Functionally, E3 ubiquitin-protein ligase which targets misfolded chaperone substrates towards proteasomal degradation. Plays a role in the maintenance of mitochondrial morphology and promotes mitophagic removal of dysfunctional mitochondria; thereby acts as a protector against apoptosis in response to cellular stress. Negatively regulates vascular smooth muscle contraction, via degradation of the transcriptional activator MYOCD and subsequent loss of transcription of genes involved in vascular smooth muscle contraction. Promotes survival and proliferation of cardiac smooth muscle cells via ubiquitination and degradation of FOXO1, resulting in subsequent repression of FOXO1-mediated transcription of pro-apoptotic genes. Ubiquitinates ICER-type isoforms of CREM and targets them for proteasomal degradation, thereby acts as a positive effector of MAPK/ERK-mediated inhibition of apoptosis in cardiomyocytes. Inhibits lipopolysaccharide-induced apoptosis and hypertrophy in cardiomyocytes, via ubiquitination and subsequent proteasomal degradation of NFATC3. Collaborates with ATXN3 in the degradation of misfolded chaperone substrates: ATXN3 restricting the length of ubiquitin chain attached to STUB1/CHIP substrates and preventing further chain extension. Ubiquitinates NOS1 in concert with Hsp70 and Hsp40. Modulates the activity of several chaperone complexes, including Hsp70, Hsc70 and Hsp90. Ubiquitinates CHRNA3 targeting it for endoplasmic reticulum-associated degradation in cortical neurons, as part of the STUB1-VCP-UBXN2A complex. Ubiquitinates and promotes ESR1 proteasomal degradation in response to age-related circulating estradiol (17-beta-estradiol/E2) decline, thereby promotes neuronal apoptosis in response to ischemic reperfusion injury. Mediates transfer of non-canonical short ubiquitin chains to HSPA8 that have no effect on HSPA8 degradation. Mediates polyubiquitination of DNA polymerase beta (POLB) at 'Lys-41', 'Lys-61' and 'Lys-81', thereby playing a role in base-excision repair: catalyzes polyubiquitination by amplifying the HUWE1/ARF-BP1-dependent monoubiquitination and leading to POLB-degradation by the proteasome. Mediates polyubiquitination of CYP3A4. Ubiquitinates EPHA2 and may regulate the receptor stability and activity through proteasomal degradation. Acts as a co-chaperone for HSPA1A and HSPA1B chaperone proteins and promotes ubiquitin-mediated protein degradation. Negatively regulates the suppressive function of regulatory T-cells (Treg) during inflammation by mediating the ubiquitination and degradation of FOXP3 in a HSPA1A/B-dependent manner. Catalyzes monoubiquitination of SIRT6, preventing its degradation by the proteasome. Likely mediates polyubiquitination and down-regulates plasma membrane expression of PD-L1/CD274, an immune inhibitory ligand critical for immune tolerance to self and antitumor immunity. Negatively regulates TGF-beta signaling by modulating the basal level of SMAD3 via ubiquitin-mediated degradation. Plays a role in the degradation of TP53. Mediates ubiquitination of RIPK3 leading to its subsequent proteasome-dependent degradation. May regulate myosin assembly in striated muscles together with UBE4B and VCP/p97 by targeting myosin chaperone UNC45B for proteasomal degradation. Ubiquitinates PPARG in macrophages playing a role in M2 macrophages polarization and angiogenesis. The protein is E3 ubiquitin-protein ligase CHIP of Mus musculus (Mouse).